Reading from the N-terminus, the 95-residue chain is Small ribosomal subunit protein bS16 (95 aa).

This sequence belongs to the bacterial ribosomal protein bS16 family.

This chain is Small ribosomal subunit protein bS16, found in Thermotoga neapolitana (strain ATCC 49049 / DSM 4359 / NBRC 107923 / NS-E).